The following is an 86-amino-acid chain: Large ribosomal subunit protein bL27 (86 aa).

Over residues 1–10 the composition is skewed to gly residues; that stretch reads MAQKKGGGST. A disordered region spans residues 1 to 21; that stretch reads MAQKKGGGSTRNGRDSESKRL.

The protein belongs to the bacterial ribosomal protein bL27 family.

The protein is Large ribosomal subunit protein bL27 of Cupriavidus pinatubonensis (strain JMP 134 / LMG 1197) (Cupriavidus necator (strain JMP 134)).